A 368-amino-acid polypeptide reads, in one-letter code: MAALSTARRVVIKIGSALLVDRTSSALRQEWLLSLAEDVARLKKQGKDVILVSSGSIALGRGALGLPRKDLPLEQSQAAAAVGQIRLARAYEEALAPHGITTAQVLVTLEDSENRRRYLNSRATLETLIGLGAVPIVNENDTIATDEIRYGDNDRLAAQVAVTVGADVLILLSDVDGFYSANPALDPDAKRFDRIEQITPEIEAMAGDGVSGLSKGGMITKLLAAKMATAAGCAMAISEGSVMSPVSALEAGAASTWFTAQGDPQVARKRWIAAMKTRGVITVDEGAAKALHNGNSLLPAGVRHVEGDFGRGDPLAILGPDGRKLGQGLSRYTAEEARALQGHRSDEIEAILGYAGRAALIHRDDMAL.

Residue Lys13 coordinates ATP. 3 residues coordinate substrate: Ser54, Asp141, and Asn153. Residue 173 to 174 (SD) participates in ATP binding. One can recognise a PUA domain in the interval 278–355 (RGVITVDEGA…DEIEAILGYA (78 aa)).

Belongs to the glutamate 5-kinase family.

It localises to the cytoplasm. The enzyme catalyses L-glutamate + ATP = L-glutamyl 5-phosphate + ADP. It functions in the pathway amino-acid biosynthesis; L-proline biosynthesis; L-glutamate 5-semialdehyde from L-glutamate: step 1/2. Catalyzes the transfer of a phosphate group to glutamate to form L-glutamate 5-phosphate. The chain is Glutamate 5-kinase from Ruegeria sp. (strain TM1040) (Silicibacter sp.).